The sequence spans 270 residues: 2-C-methyl-D-erythritol 4-phosphate cytidylyltransferase (270 aa).

The interval 1-33 is disordered; sequence MSDESRPSPAETPATTFAETSAETSAAGRSPAR. Over residues 7 to 27 the composition is skewed to low complexity; that stretch reads PSPAETPATTFAETSAETSAA.

Belongs to the IspD/TarI cytidylyltransferase family. IspD subfamily.

It carries out the reaction 2-C-methyl-D-erythritol 4-phosphate + CTP + H(+) = 4-CDP-2-C-methyl-D-erythritol + diphosphate. The protein operates within isoprenoid biosynthesis; isopentenyl diphosphate biosynthesis via DXP pathway; isopentenyl diphosphate from 1-deoxy-D-xylulose 5-phosphate: step 2/6. Functionally, catalyzes the formation of 4-diphosphocytidyl-2-C-methyl-D-erythritol from CTP and 2-C-methyl-D-erythritol 4-phosphate (MEP). In Streptomyces coelicolor (strain ATCC BAA-471 / A3(2) / M145), this protein is 2-C-methyl-D-erythritol 4-phosphate cytidylyltransferase.